Here is a 101-residue protein sequence, read N- to C-terminus: NADH-quinone oxidoreductase subunit K (101 aa).

Helical transmembrane passes span 4-24 (VGHY…GIFI), 29-49 (IIVI…NLVA), and 65-85 (FVLT…VIYF).

This sequence belongs to the complex I subunit 4L family. In terms of assembly, NDH-1 is composed of 14 different subunits. Subunits NuoA, H, J, K, L, M, N constitute the membrane sector of the complex.

The protein localises to the cell inner membrane. The catalysed reaction is a quinone + NADH + 5 H(+)(in) = a quinol + NAD(+) + 4 H(+)(out). NDH-1 shuttles electrons from NADH, via FMN and iron-sulfur (Fe-S) centers, to quinones in the respiratory chain. The immediate electron acceptor for the enzyme in this species is believed to be ubiquinone. Couples the redox reaction to proton translocation (for every two electrons transferred, four hydrogen ions are translocated across the cytoplasmic membrane), and thus conserves the redox energy in a proton gradient. In Sphingopyxis alaskensis (strain DSM 13593 / LMG 18877 / RB2256) (Sphingomonas alaskensis), this protein is NADH-quinone oxidoreductase subunit K.